The chain runs to 415 residues: 26S proteasome regulatory subunit 6B (415 aa).

203 to 210 contacts ATP; it reads GPPGCGKT.

It belongs to the AAA ATPase family.

Its subcellular location is the cytoplasm. The protein localises to the nucleus. In terms of biological role, the 26S proteasome is involved in the ATP-dependent degradation of ubiquitinated proteins. The regulatory (or ATPase) complex confers ATP dependency and substrate specificity to the 26S complex. In Manduca sexta (Tobacco hawkmoth), this protein is 26S proteasome regulatory subunit 6B.